We begin with the raw amino-acid sequence, 160 residues long: SsrA-binding protein (160 aa).

The protein belongs to the SmpB family.

It is found in the cytoplasm. Required for rescue of stalled ribosomes mediated by trans-translation. Binds to transfer-messenger RNA (tmRNA), required for stable association of tmRNA with ribosomes. tmRNA and SmpB together mimic tRNA shape, replacing the anticodon stem-loop with SmpB. tmRNA is encoded by the ssrA gene; the 2 termini fold to resemble tRNA(Ala) and it encodes a 'tag peptide', a short internal open reading frame. During trans-translation Ala-aminoacylated tmRNA acts like a tRNA, entering the A-site of stalled ribosomes, displacing the stalled mRNA. The ribosome then switches to translate the ORF on the tmRNA; the nascent peptide is terminated with the 'tag peptide' encoded by the tmRNA and targeted for degradation. The ribosome is freed to recommence translation, which seems to be the essential function of trans-translation. The protein is SsrA-binding protein of Pectobacterium carotovorum subsp. carotovorum (strain PC1).